A 230-amino-acid chain; its full sequence is tRNA (cytidine-2'-O-)-methyltransferase TrmJ (230 aa).

S-adenosyl-L-methionine is bound by residues 79 to 81, G115, I135, and 142 to 144; these read TSG and PIM.

The protein belongs to the class IV-like SAM-binding methyltransferase superfamily. RNA methyltransferase TrmH family. In terms of assembly, homodimer.

It localises to the cytoplasm. It carries out the reaction cytidine(32) in tRNA + S-adenosyl-L-methionine = 2'-O-methylcytidine(32) in tRNA + S-adenosyl-L-homocysteine + H(+). Catalyzes the formation of 2'O-methylated cytidine (Cm32) at position 32 in tRNA. This Methanocaldococcus jannaschii (strain ATCC 43067 / DSM 2661 / JAL-1 / JCM 10045 / NBRC 100440) (Methanococcus jannaschii) protein is tRNA (cytidine-2'-O-)-methyltransferase TrmJ.